The sequence spans 200 residues: Large ribosomal subunit protein uL4 (200 aa).

The interval 43-71 (RAQKTRAEVSGSGKKPWRQKGTGRARSGD) is disordered.

It belongs to the universal ribosomal protein uL4 family. Part of the 50S ribosomal subunit.

Its function is as follows. One of the primary rRNA binding proteins, this protein initially binds near the 5'-end of the 23S rRNA. It is important during the early stages of 50S assembly. It makes multiple contacts with different domains of the 23S rRNA in the assembled 50S subunit and ribosome. Functionally, forms part of the polypeptide exit tunnel. The sequence is that of Large ribosomal subunit protein uL4 from Histophilus somni (strain 129Pt) (Haemophilus somnus).